We begin with the raw amino-acid sequence, 477 residues long: Ribulose bisphosphate carboxylase large chain (477 aa).

Residues 1-2 (MS) constitute a propeptide that is removed on maturation. Position 3 is an N-acetylproline (Pro-3). An N6,N6,N6-trimethyllysine modification is found at Lys-14. 2 residues coordinate substrate: Asn-123 and Thr-173. The active-site Proton acceptor is the Lys-175. Lys-177 contributes to the substrate binding site. Residues Lys-201, Asp-203, and Glu-204 each coordinate Mg(2+). Lys-201 bears the N6-carboxylysine mark. His-294 (proton acceptor) is an active-site residue. The substrate site is built by Arg-295, His-327, and Ser-379.

The protein belongs to the RuBisCO large chain family. Type I subfamily. Heterohexadecamer of 8 large chains and 8 small chains; disulfide-linked. The disulfide link is formed within the large subunit homodimers. Mg(2+) is required as a cofactor. Post-translationally, the disulfide bond which can form in the large chain dimeric partners within the hexadecamer appears to be associated with oxidative stress and protein turnover.

The protein resides in the plastid. It is found in the chloroplast. The enzyme catalyses 2 (2R)-3-phosphoglycerate + 2 H(+) = D-ribulose 1,5-bisphosphate + CO2 + H2O. The catalysed reaction is D-ribulose 1,5-bisphosphate + O2 = 2-phosphoglycolate + (2R)-3-phosphoglycerate + 2 H(+). In terms of biological role, ruBisCO catalyzes two reactions: the carboxylation of D-ribulose 1,5-bisphosphate, the primary event in carbon dioxide fixation, as well as the oxidative fragmentation of the pentose substrate in the photorespiration process. Both reactions occur simultaneously and in competition at the same active site. The chain is Ribulose bisphosphate carboxylase large chain from Persea americana (Avocado).